The sequence spans 330 residues: Probable xanthine dehydrogenase subunit A (330 aa).

Could be composed of four subunits: PucA, PucC, PucD and PucE.

The enzyme catalyses xanthine + NAD(+) + H2O = urate + NADH + H(+). It catalyses the reaction hypoxanthine + NAD(+) + H2O = xanthine + NADH + H(+). Its pathway is purine metabolism; hypoxanthine degradation; urate from hypoxanthine: step 1/2. It functions in the pathway purine metabolism; hypoxanthine degradation; urate from hypoxanthine: step 2/2. Functionally, oxidizes hypoxanthine and xanthine to uric acid. PucA subunit could exert a molybdenum cofactor recruiting function. This is Probable xanthine dehydrogenase subunit A (pucA) from Bacillus subtilis (strain 168).